The sequence spans 510 residues: Inositol-3-phosphate synthase (510 aa).

NAD(+) is bound by residues Gly-70, Gly-71, Asn-72, Asn-73, Asp-143, Ile-180, Gln-190, Arg-193, Thr-230, Ala-231, Asn-232, Thr-233, Gly-281, Ser-282, Asp-306, Ser-309, Asn-340, Asn-341, Asp-342, Lys-355, Ala-393, Asp-394, Asp-422, and Ser-423.

Belongs to the myo-inositol 1-phosphate synthase family. Requires NAD(+) as cofactor.

The protein localises to the cytoplasm. The protein resides in the cytosol. It localises to the nucleus. The catalysed reaction is D-glucose 6-phosphate = 1D-myo-inositol 3-phosphate. The protein operates within polyol metabolism; myo-inositol biosynthesis; myo-inositol from D-glucose 6-phosphate: step 1/2. In terms of biological role, key enzyme in myo-inositol biosynthesis pathway that catalyzes the conversion of glucose 6-phosphate to 1-myo-inositol 1-phosphate in a NAD-dependent manner. The protein is Inositol-3-phosphate synthase of Brassica napus (Rape).